The chain runs to 399 residues: Phosphoglycerate kinase (399 aa).

Residues Asp22–Asn24, Arg38, His61–Arg64, Arg120, and Arg153 each bind substrate. ATP contacts are provided by residues Lys204, Glu326, and Gly352–Thr355.

Belongs to the phosphoglycerate kinase family. Monomer.

It is found in the cytoplasm. The enzyme catalyses (2R)-3-phosphoglycerate + ATP = (2R)-3-phospho-glyceroyl phosphate + ADP. The protein operates within carbohydrate degradation; glycolysis; pyruvate from D-glyceraldehyde 3-phosphate: step 2/5. The protein is Phosphoglycerate kinase of Geotalea uraniireducens (strain Rf4) (Geobacter uraniireducens).